A 327-amino-acid chain; its full sequence is Urease accessory protein UreD (327 aa).

This sequence belongs to the UreD family. In terms of assembly, ureD, UreF and UreG form a complex that acts as a GTP-hydrolysis-dependent molecular chaperone, activating the urease apoprotein by helping to assemble the nickel containing metallocenter of UreC. The UreE protein probably delivers the nickel.

The protein resides in the cytoplasm. Its function is as follows. Required for maturation of urease via the functional incorporation of the urease nickel metallocenter. This Yersinia enterocolitica serotype O:8 / biotype 1B (strain NCTC 13174 / 8081) protein is Urease accessory protein UreD.